Reading from the N-terminus, the 146-residue chain is CysO-cysteine peptidase (146 aa).

One can recognise an MPN domain in the interval 11–134 (LVIRADLVNA…LRSYRIVDGA (124 aa)). 3 residues coordinate Zn(2+): His88, His90, and Asp101. The JAMM motif signature appears at 88–101 (HSHTATEAYPSRTD).

Belongs to the peptidase M67A family. Zn(2+) is required as a cofactor.

It carries out the reaction [CysO sulfur-carrier protein]-Gly-NH-CH2-C(O)-S-L-Cys + H2O = [CysO sulfur-carrier protein]-C-terminal Gly-Gly + L-cysteine + H(+). The protein operates within amino-acid biosynthesis; L-cysteine biosynthesis. Protease that hydrolyzes the covalent CysO-cysteine adduct synthesized by CysM to release L-cysteine and regenerate CysO. In Mycobacterium bovis (strain ATCC BAA-935 / AF2122/97), this protein is CysO-cysteine peptidase (mec).